The chain runs to 723 residues: UPF0313 protein YgiQ (723 aa).

Residues 372-650 enclose the Radical SAM core domain; the sequence is AYEMIRFSIN…KALLRYHDPA (279 aa). Cys386, Cys390, and Cys393 together coordinate [4Fe-4S] cluster. Residues 686–723 form a disordered region; it reads EARRQNRNTRPALTKHTPVEHQRQGLAANKKRGKGAGR. Positions 714 to 723 are enriched in basic residues; that stretch reads NKKRGKGAGR.

The protein belongs to the UPF0313 family. [4Fe-4S] cluster serves as cofactor.

The chain is UPF0313 protein YgiQ from Salmonella typhimurium (strain LT2 / SGSC1412 / ATCC 700720).